A 101-amino-acid polypeptide reads, in one-letter code: Large ribosomal subunit protein uL23 (101 aa).

Belongs to the universal ribosomal protein uL23 family. As to quaternary structure, part of the 50S ribosomal subunit. Contacts protein L29, and trigger factor when it is bound to the ribosome.

Functionally, one of the early assembly proteins it binds 23S rRNA. One of the proteins that surrounds the polypeptide exit tunnel on the outside of the ribosome. Forms the main docking site for trigger factor binding to the ribosome. This chain is Large ribosomal subunit protein uL23, found in Corynebacterium efficiens (strain DSM 44549 / YS-314 / AJ 12310 / JCM 11189 / NBRC 100395).